We begin with the raw amino-acid sequence, 105 residues long: Synaptic plasticity regulator PANTS (105 aa).

It belongs to the UPF0545 family. In terms of assembly, interacts with RTN4 isoform A/Nogo-A; the interaction results in enhanced RTN4-mediated inhibition of AMPA receptor clustering. Also interacts with NCAM1, RANBP2 and CCT8. Post-translationally, rapidly degraded by proteolysis following neuronal stimulation, resulting in increased AMPA receptor clustering.

The protein localises to the synapse. It localises to the synaptic cleft. Negatively regulates long-term potentiation and modulates adult synaptic plasticity. Stabilizes the interaction of RTN4 isoform A/Nogo-A with its receptors, inhibiting clustering of postsynaptic AMPA receptors at synaptic sites. Upon neuronal stimulation, degraded at synapses, reducing RTN4 signaling and allowing AMPA receptor clustering at individual synapses. This Homo sapiens (Human) protein is Synaptic plasticity regulator PANTS (C22orf39).